The following is a 460-amino-acid chain: Putative 2,3-dihydroxypropane-1-sulfonate exporter (460 aa).

Residues 1-18 (MSQTSSNPATLRLPFKEK) are Cytoplasmic-facing. A helical membrane pass occupies residues 19-39 (LAYGLGDLGSNILLDIGTLYL). The Periplasmic segment spans residues 40–46 (LKFYTDV). A helical transmembrane segment spans residues 47–67 (LGLPGTYGGIIFLIAKFFTAF). The Cytoplasmic portion of the chain corresponds to 68-91 (TDMGTGIMLDSRRKIGPKGKFRPF). Residues 92–112 (VLYAAFPVTLLAIANFVGTPF) form a helical membrane-spanning segment. At 113 to 122 (EVTGKTVVAT) the chain is on the periplasmic side. Residues 123-143 (MLFMLYGLVFSMMNCSYGAMV) form a helical membrane-spanning segment. Over 144–161 (PAITKNPDERASLAAWRQ) the chain is Cytoplasmic. Residues 162-182 (GGATLGLLLCTVGFVPVMNLI) form a helical membrane-spanning segment. The Periplasmic portion of the chain corresponds to 183–190 (EGNAQLSY). The helical transmembrane segment at 191-211 (IFAATLFSLFGLLFMWLCYAG) threads the bilayer. The Cytoplasmic portion of the chain corresponds to 212–242 (VKERYVEVKPVDSAQKPGLLQSFRAIAGNRP). Residues 243-263 (LFILCIANLCTLGAFNVKLAI) form a helical membrane-spanning segment. The Periplasmic segment spans residues 264-275 (QVYYTQYVLNDP). The helical transmembrane segment at 276-296 (ILLSWMGFFSMGCIFIGVFLM) threads the bilayer. Residues 297–307 (PGAVRRFGKKK) are Cytoplasmic-facing. The helical transmembrane segment at 308–328 (VYIGGLLIWVAGDLLNYFFGG) threads the bilayer. A topological domain (periplasmic) is located at residue Gly329. A helical transmembrane segment spans residues 330–350 (SVSFVAFSCLAFFGSAFVNSL). The Cytoplasmic segment spans residues 351–386 (NWALVSDTVEYGEWRTGVRSEGTVYTGFTFFRKVSQ). A helical membrane pass occupies residues 387–407 (ALAGFFPGWMLTQIGYIPNVV). Residues 408 to 418 (QSAGTVEGLRQ) lie on the Periplasmic side of the membrane. The helical transmembrane segment at 419 to 439 (LIFIYPCVLAVITIIAMGCFY) threads the bilayer. Topologically, residues 440–460 (NLNEKMYVRIVEEIEARKHTV) are cytoplasmic.

This sequence belongs to the sodium:galactoside symporter (TC 2.A.2) family.

It localises to the cell inner membrane. Could be involved in the export of 2,3-dihydroxypropane-1-sulfonate (DHPS). The polypeptide is Putative 2,3-dihydroxypropane-1-sulfonate exporter (yihP) (Salmonella typhimurium (strain LT2 / SGSC1412 / ATCC 700720)).